The primary structure comprises 189 residues: Probable nicotinate-nucleotide adenylyltransferase (189 aa).

The protein belongs to the NadD family.

The catalysed reaction is nicotinate beta-D-ribonucleotide + ATP + H(+) = deamido-NAD(+) + diphosphate. Its pathway is cofactor biosynthesis; NAD(+) biosynthesis; deamido-NAD(+) from nicotinate D-ribonucleotide: step 1/1. In terms of biological role, catalyzes the reversible adenylation of nicotinate mononucleotide (NaMN) to nicotinic acid adenine dinucleotide (NaAD). The sequence is that of Probable nicotinate-nucleotide adenylyltransferase from Exiguobacterium sibiricum (strain DSM 17290 / CCUG 55495 / CIP 109462 / JCM 13490 / 255-15).